The following is a 134-amino-acid chain: Small ribosomal subunit protein uS11 (134 aa).

This sequence belongs to the universal ribosomal protein uS11 family. In terms of assembly, part of the 30S ribosomal subunit. Interacts with proteins S7 and S18. Binds to IF-3.

Located on the platform of the 30S subunit, it bridges several disparate RNA helices of the 16S rRNA. Forms part of the Shine-Dalgarno cleft in the 70S ribosome. This Corynebacterium glutamicum (strain R) protein is Small ribosomal subunit protein uS11.